Here is a 46-residue protein sequence, read N- to C-terminus: Large ribosomal subunit protein bL36B (46 aa).

This sequence belongs to the bacterial ribosomal protein bL36 family.

The protein is Large ribosomal subunit protein bL36B of Cronobacter sakazakii (strain ATCC BAA-894) (Enterobacter sakazakii).